The sequence spans 504 residues: Signal recognition particle subunit SRP54 (504 aa).

The interval 1–295 is NG domain; it reads MVLADLGRKI…KTQPFISKLL (295 aa). Residues 108–115, 190–194, and 248–251 contribute to the GTP site; these read GLQGSGKT, DTSGR, and TKLD. Positions 296 to 504 are M-domain; sequence GMGDIEGLID…MKGMMGFNNM (209 aa).

This sequence belongs to the GTP-binding SRP family. SRP54 subfamily. Component of a signal recognition particle (SRP) complex that consists of a 7SL RNA molecule of 300 nucleotides and six protein subunits: SRP72, SRP68, SRP54, SRP19, SRP14 and SRP9. Interacts with RNPS1. Interacts with the SRP receptor subunit SRPRA.

Its subcellular location is the nucleus speckle. The protein localises to the cytoplasm. It localises to the endoplasmic reticulum. The catalysed reaction is GTP + H2O = GDP + phosphate + H(+). Component of the signal recognition particle (SRP) complex, a ribonucleoprotein complex that mediates the cotranslational targeting of secretory and membrane proteins to the endoplasmic reticulum (ER). As part of the SRP complex, associates with the SRP receptor (SR) component SRPRA to target secretory proteins to the endoplasmic reticulum membrane. Binds to the signal sequence of presecretory proteins when they emerge from the ribosomes. Displays basal GTPase activity, and stimulates reciprocal GTPase activation of the SR subunit SRPRA. Forms a guanosine 5'-triphosphate (GTP)-dependent complex with the SR subunit SRPRA. SR compaction and GTPase mediated rearrangement of SR drive SRP-mediated cotranslational protein translocation into the ER. Requires the presence of SRP9/SRP14 and/or SRP19 to stably interact with RNA. Plays a role in proliferation and differentiation of granulocytic cells, neutrophils migration capacity and exocrine pancreas development. This chain is Signal recognition particle subunit SRP54, found in Homo sapiens (Human).